A 38-amino-acid polypeptide reads, in one-letter code: Conotoxin FVIA (38 aa).

Positions 1 to 12 are excised as a propeptide; it reads ILSLSLLDRSTR. Cystine bridges form between cysteine 13-cysteine 28, cysteine 20-cysteine 32, and cysteine 27-cysteine 37. Cysteine 37 bears the Cysteine amide mark.

Belongs to the conotoxin O1 superfamily. Expressed by the venom duct.

It localises to the secreted. Functionally, omega-conotoxins act at presynaptic membranes, they bind and block voltage-gated calcium channels (Cav). This peptide reversibly and selectively inhibits Cav2.2/CACNA1B (IC(50)=11.5 nM) voltage-gated calcium channels. Channel time recovery after toxin exposure is short (about 50 seconds). In vivo, it effectively and dose-dependently reduces nociceptive behavior in the formalin test and in neuropathic pain models, and reduces mechanical and thermal allodynia in the tail nerve injury rat model. It also shows significant analgesic effects on writhing in mouse neurotransmitter- and cytokine-induced pain models, though it has no effect on acute thermal pain and interferon-gamma-induced pain. It also depresses blood pressure immediately after administration, but pressure recovers relatively quickly and completely. The sequence is that of Conotoxin FVIA from Conus fulmen (Thunderbolt cone).